Reading from the N-terminus, the 555-residue chain is Urocanate hydratase (555 aa).

Residues 52–53 (GG), Gln130, 176–178 (GMG), Glu196, Arg201, 242–243 (NA), 263–267 (QTSAH), 273–274 (YL), and Tyr322 each bind NAD(+). The active site involves Cys410. Position 492 (Gly492) interacts with NAD(+).

It belongs to the urocanase family. NAD(+) serves as cofactor.

The protein resides in the cytoplasm. The enzyme catalyses 4-imidazolone-5-propanoate = trans-urocanate + H2O. Its pathway is amino-acid degradation; L-histidine degradation into L-glutamate; N-formimidoyl-L-glutamate from L-histidine: step 2/3. Catalyzes the conversion of urocanate to 4-imidazolone-5-propionate. This chain is Urocanate hydratase, found in Shewanella baltica (strain OS223).